The chain runs to 444 residues: Probable glycine dehydrogenase (decarboxylating) subunit 1 (444 aa).

It belongs to the GcvP family. N-terminal subunit subfamily. In terms of assembly, the glycine cleavage system is composed of four proteins: P, T, L and H. In this organism, the P 'protein' is a heterodimer of two subunits.

The catalysed reaction is N(6)-[(R)-lipoyl]-L-lysyl-[glycine-cleavage complex H protein] + glycine + H(+) = N(6)-[(R)-S(8)-aminomethyldihydrolipoyl]-L-lysyl-[glycine-cleavage complex H protein] + CO2. Its function is as follows. The glycine cleavage system catalyzes the degradation of glycine. The P protein binds the alpha-amino group of glycine through its pyridoxal phosphate cofactor; CO(2) is released and the remaining methylamine moiety is then transferred to the lipoamide cofactor of the H protein. The chain is Probable glycine dehydrogenase (decarboxylating) subunit 1 from Moorella thermoacetica (strain ATCC 39073 / JCM 9320).